We begin with the raw amino-acid sequence, 242 residues long: Immunity protein TsiV2 (242 aa).

Helical transmembrane passes span 39–59, 66–86, and 118–138; these read VFGA…FADI, FWGF…LFMP, and FAWV…PLAF.

It localises to the host membrane. In terms of biological role, immunity protein that plays a role in preventing early activation of toxin VasX. The chain is Immunity protein TsiV2 from Vibrio cholerae serotype O1 (strain ATCC 39315 / El Tor Inaba N16961).